The following is a 1157-amino-acid chain: Probable inactive leucine-rich repeat receptor kinase XIAO (1157 aa).

A signal peptide spans 1–21 (MPPPPRLLFLLVMLLVVAAPG). Asparagine 58 carries an N-linked (GlcNAc...) asparagine glycan. LRR repeat units lie at residues 101–125 (LVYLEKLSLRSNSLSGTIPASLSRI), 127–149 (SLRAVYLQYNSLSGPIPQSFLAN), 150–172 (LTNLQTFDVSGNLLSGPVPVSFP), 173–196 (PSLKYLDLSSNAFSGTIPANVSAS), 198–220 (TSLQFLNLSFNRLRGTVPASLGT), 221–245 (LQDLHYLWLDGNLLEGTIPSALSNC), 247–269 (ALLHLSLQGNALRGILPPAVAAI), 270–293 (PSLQILSVSRNRLTGAIPAAAFGG), 296–319 (NSSLRIVQVGGNAFSQVDVPVSLG), 320–343 (KDLQVVDLRANKLAGPFPSWLAGA), 344–367 (GGLTVLDLSGNAFTGEVPPAVGQL), 368–391 (TALQELRLGGNAFTGTVPAEIGRC), 393–414 (ALQVLDLEDNRFSGEVPAALGG), 415–439 (LRRLREVYLGGNSFSGQIPASLGNL), 440–463 (SWLEALSTPGNRLTGDLPSELFVL), 464–487 (GNLTFLDLSDNKLAGEIPPSIGNL), 489–511 (ALQSLNLSGNSFSGRIPSNIGNL), 513–536 (NLRVLDLSGQKNLSGNLPAELFGL), 537–559 (PQLQYVSLAGNSFSGDVPEGFSS), 561–583 (WSLRHLNLSVNSFTGSMPATYGY), 584–608 (LPSLQVLSASHNRICGELPVELANC), 609–631 (SNLTVLDLRSNQLTGPIPGDFAR), 632–656 (LGELEELDLSHNQLSRKIPPEISNC), 658–680 (SLVTLKLDDNHLGGEIPASLSNL), 681–704 (SKLQTLDLSSNNLTGSIPASLAQI), and 706–728 (GMLSLNVSQNELSGEIPAMLGSR). A glycan (N-linked (GlcNAc...) asparagine) is linked at asparagine 149. 3 N-linked (GlcNAc...) asparagine glycosylation sites follow: asparagine 192, asparagine 204, and asparagine 244. The N-linked (GlcNAc...) asparagine glycan is linked to asparagine 296. Asparagine 438 is a glycosylation site (N-linked (GlcNAc...) asparagine). N-linked (GlcNAc...) asparagine glycosylation is found at asparagine 465, asparagine 494, and asparagine 524. Asparagine 567, asparagine 607, asparagine 610, asparagine 655, asparagine 679, asparagine 692, and asparagine 711 each carry an N-linked (GlcNAc...) asparagine glycan. A helical membrane pass occupies residues 765–785 (LALLIGVVAATVLLLVLFCCC). The tract at residues 804–825 (VKKRRRSPGRGSGSSGTSTDSV) is disordered. The 296-residue stretch at 849–1144 (FDEENVLSRG…LEGCRVGPDI (296 aa)) folds into the Protein kinase domain. ATP is bound by residues 855 to 863 (LSRGRHGLV), 930 to 932 (DYM), 936 to 939 (NLAT), 980 to 985 (DVKPQN), and aspartate 998.

Belongs to the protein kinase superfamily. Ser/Thr protein kinase family. Expressed in developing culm, coleoptile, primary root, young spikelet, young leaf blade and leaf sheath, floral meristem primordia, stamen primordia, and lemma and palea primordia.

It localises to the cell membrane. In terms of biological role, functions in the early stages of organ development by regulating cell division rate. Is probably involved in the regulation of a number of cell-cycle genes. May act as regulator of brassinosteroid (BR) signaling and cell-cycle controlling organ growth. This chain is Probable inactive leucine-rich repeat receptor kinase XIAO, found in Oryza sativa subsp. japonica (Rice).